A 378-amino-acid chain; its full sequence is Histidine decarboxylase (378 aa).

His120 provides a ligand contact to substrate. Position 233 is an N6-(pyridoxal phosphate)lysine (Lys233).

It belongs to the group II decarboxylase family. In terms of assembly, homotetramer. It depends on pyridoxal 5'-phosphate as a cofactor.

The enzyme catalyses L-histidine + H(+) = histamine + CO2. The polypeptide is Histidine decarboxylase (hdc) (Klebsiella aerogenes (Enterobacter aerogenes)).